Here is a 506-residue protein sequence, read N- to C-terminus: Bifunctional purine biosynthesis protein PurH (506 aa).

One can recognise an MGS-like domain in the interval 1–146; it reads MARLALLSVS…KNFAHLTVLC (146 aa).

This sequence belongs to the PurH family.

It catalyses the reaction (6R)-10-formyltetrahydrofolate + 5-amino-1-(5-phospho-beta-D-ribosyl)imidazole-4-carboxamide = 5-formamido-1-(5-phospho-D-ribosyl)imidazole-4-carboxamide + (6S)-5,6,7,8-tetrahydrofolate. It carries out the reaction IMP + H2O = 5-formamido-1-(5-phospho-D-ribosyl)imidazole-4-carboxamide. Its pathway is purine metabolism; IMP biosynthesis via de novo pathway; 5-formamido-1-(5-phospho-D-ribosyl)imidazole-4-carboxamide from 5-amino-1-(5-phospho-D-ribosyl)imidazole-4-carboxamide (10-formyl THF route): step 1/1. The protein operates within purine metabolism; IMP biosynthesis via de novo pathway; IMP from 5-formamido-1-(5-phospho-D-ribosyl)imidazole-4-carboxamide: step 1/1. In Trichormus variabilis (strain ATCC 29413 / PCC 7937) (Anabaena variabilis), this protein is Bifunctional purine biosynthesis protein PurH.